Reading from the N-terminus, the 561-residue chain is Ankyrin repeat protein OPG189 (561 aa).

ANK repeat units follow at residues 68 to 98 (YGEN…NINK), 172 to 208 (YGCT…DVDK), 212 to 242 (YGNT…NIDS), 246 to 275 (NGYT…NVNA), 279 to 307 (FGTT…ELEI), 342 to 371 (YNET…DFET), and 375 to 404 (SGCT…SLKI).

The protein belongs to the orthopoxvirus OPG189 protein family.

Functionally, contributes to viral release without involving rearrangement of host actin. This Cynomys gunnisoni (Gunnison's prairie dog) protein is Ankyrin repeat protein OPG189 (OPG189).